The sequence spans 1412 residues: DNA-directed RNA polymerase subunit beta' (1412 aa).

Zn(2+)-binding residues include Cys-70, Cys-72, Cys-85, and Cys-88. Residues Asp-460, Asp-462, and Asp-464 each contribute to the Mg(2+) site. Residues Cys-819, Cys-893, Cys-900, and Cys-903 each coordinate Zn(2+). Residues 1392 to 1412 (EEAFEFGTPSTPAEEPQHPAE) form a disordered region.

The protein belongs to the RNA polymerase beta' chain family. As to quaternary structure, the RNAP catalytic core consists of 2 alpha, 1 beta, 1 beta' and 1 omega subunit. When a sigma factor is associated with the core the holoenzyme is formed, which can initiate transcription. Mg(2+) serves as cofactor. Zn(2+) is required as a cofactor.

It carries out the reaction RNA(n) + a ribonucleoside 5'-triphosphate = RNA(n+1) + diphosphate. Its function is as follows. DNA-dependent RNA polymerase catalyzes the transcription of DNA into RNA using the four ribonucleoside triphosphates as substrates. This is DNA-directed RNA polymerase subunit beta' from Burkholderia thailandensis (strain ATCC 700388 / DSM 13276 / CCUG 48851 / CIP 106301 / E264).